The following is a 503-amino-acid chain: Maturase K (503 aa).

The protein belongs to the intron maturase 2 family. MatK subfamily.

It is found in the plastid. The protein resides in the chloroplast. Functionally, usually encoded in the trnK tRNA gene intron. Probably assists in splicing its own and other chloroplast group II introns. This Psilotum nudum (Whisk fern) protein is Maturase K.